The sequence spans 440 residues: Xaa-Pro dipeptidase (440 aa).

Mn(2+)-binding residues include Asp244, Asp255, His335, Glu380, and Glu419.

This sequence belongs to the peptidase M24B family. Bacterial-type prolidase subfamily. Mn(2+) serves as cofactor.

It carries out the reaction Xaa-L-Pro dipeptide + H2O = an L-alpha-amino acid + L-proline. Functionally, splits dipeptides with a prolyl residue in the C-terminal position. In Shewanella baltica (strain OS185), this protein is Xaa-Pro dipeptidase.